Reading from the N-terminus, the 213-residue chain is Orotate phosphoribosyltransferase (213 aa).

Residue Lys26 coordinates 5-phospho-alpha-D-ribose 1-diphosphate. 34–35 contacts orotate; that stretch reads FF. Residues 72 to 73, Arg99, Lys100, Lys103, His105, and 124 to 132 each bind 5-phospho-alpha-D-ribose 1-diphosphate; these read YK and DDVITAGTA. Orotate contacts are provided by Thr128 and Arg156.

It belongs to the purine/pyrimidine phosphoribosyltransferase family. PyrE subfamily. Homodimer. Mg(2+) serves as cofactor.

The catalysed reaction is orotidine 5'-phosphate + diphosphate = orotate + 5-phospho-alpha-D-ribose 1-diphosphate. It participates in pyrimidine metabolism; UMP biosynthesis via de novo pathway; UMP from orotate: step 1/2. Functionally, catalyzes the transfer of a ribosyl phosphate group from 5-phosphoribose 1-diphosphate to orotate, leading to the formation of orotidine monophosphate (OMP). The chain is Orotate phosphoribosyltransferase from Salmonella agona (strain SL483).